We begin with the raw amino-acid sequence, 606 residues long: Gastrula zinc finger protein XlCGF66.1 (606 aa).

Disordered stretches follow at residues 1–31 (MGMWEEASDTGMKGKKKKKDKNEEEEERGKK) and 240–271 (TLHSKDSCNEGHKHLSHKSDYNKHQNPHKRQK). The span at 242-262 (HSKDSCNEGHKHLSHKSDYNK) shows a compositional bias: basic and acidic residues. 11 consecutive C2H2-type zinc fingers follow at residues 273 to 295 (FSCSKCGKCFSNLTSLHCHQKTH), 300 to 322 (LLCLKCGKCFATSSKLIIHRQTH), 328 to 350 (FSCSECRICFSKQSSLARHQITH), 384 to 407 (DFCSECGKCFATSSQLIAHQQQVH), 413 to 435 (FSCTKCGKCFSYRSRLVRHQRTH), 441 to 464 (YSCSECGKCFASSSHLIGHRQQVH), 470 to 492 (FFCSECGKYFLYQSQLVRHQRTH), 498 to 521 (YSCSECGKCFATSSQLMAHQQQVH), 527 to 549 (FSCSECGKYFLYRAHLVRHQRTH), 555 to 578 (DFCFECGKCFATSLQLIAHQQQVH), and 584 to 606 (FSCSECGKSFLYRSHLARHHRTH).

The protein belongs to the krueppel C2H2-type zinc-finger protein family.

The protein localises to the nucleus. May be involved in transcriptional regulation. This chain is Gastrula zinc finger protein XlCGF66.1, found in Xenopus laevis (African clawed frog).